Here is a 417-residue protein sequence, read N- to C-terminus: F-box protein At3g07870 (417 aa).

The 47-residue stretch at 22–68 (GGGLESLPEDIIADIFSRLPISSIARLMFVCRSWRSVLTQHGRLSSS) folds into the F-box domain.

The protein is F-box protein At3g07870 of Arabidopsis thaliana (Mouse-ear cress).